The following is an 815-amino-acid chain: Leucine--tRNA ligase (815 aa).

Residues Pro42–His52 carry the 'HIGH' region motif. The 'KMSKS' region signature appears at Lys574–Ser578. Lys577 provides a ligand contact to ATP.

Belongs to the class-I aminoacyl-tRNA synthetase family.

Its subcellular location is the cytoplasm. The catalysed reaction is tRNA(Leu) + L-leucine + ATP = L-leucyl-tRNA(Leu) + AMP + diphosphate. This chain is Leucine--tRNA ligase, found in Alcanivorax borkumensis (strain ATCC 700651 / DSM 11573 / NCIMB 13689 / SK2).